Here is a 59-residue protein sequence, read N- to C-terminus: DNA gyrase inhibitor YacG (59 aa).

Residues Cys-9, Cys-12, Cys-27, and Cys-31 each coordinate Zn(2+).

Belongs to the DNA gyrase inhibitor YacG family. In terms of assembly, interacts with GyrB. Requires Zn(2+) as cofactor.

Its function is as follows. Inhibits all the catalytic activities of DNA gyrase by preventing its interaction with DNA. Acts by binding directly to the C-terminal domain of GyrB, which probably disrupts DNA binding by the gyrase. The sequence is that of DNA gyrase inhibitor YacG from Geotalea daltonii (strain DSM 22248 / JCM 15807 / FRC-32) (Geobacter daltonii).